A 196-amino-acid polypeptide reads, in one-letter code: Ribosomal RNA large subunit methyltransferase E (196 aa).

S-adenosyl-L-methionine is bound by residues glycine 50, tryptophan 52, aspartate 70, aspartate 87, and aspartate 112. Lysine 152 functions as the Proton acceptor in the catalytic mechanism.

It belongs to the class I-like SAM-binding methyltransferase superfamily. RNA methyltransferase RlmE family.

It is found in the cytoplasm. The catalysed reaction is uridine(2552) in 23S rRNA + S-adenosyl-L-methionine = 2'-O-methyluridine(2552) in 23S rRNA + S-adenosyl-L-homocysteine + H(+). In terms of biological role, specifically methylates the uridine in position 2552 of 23S rRNA at the 2'-O position of the ribose in the fully assembled 50S ribosomal subunit. The polypeptide is Ribosomal RNA large subunit methyltransferase E (Bdellovibrio bacteriovorus (strain ATCC 15356 / DSM 50701 / NCIMB 9529 / HD100)).